Consider the following 150-residue polypeptide: D-aminoacyl-tRNA deacylase (150 aa).

The Gly-cisPro motif, important for rejection of L-amino acids signature appears at 137-138 (GP).

Belongs to the DTD family. Homodimer.

It is found in the cytoplasm. The enzyme catalyses glycyl-tRNA(Ala) + H2O = tRNA(Ala) + glycine + H(+). It catalyses the reaction a D-aminoacyl-tRNA + H2O = a tRNA + a D-alpha-amino acid + H(+). Functionally, an aminoacyl-tRNA editing enzyme that deacylates mischarged D-aminoacyl-tRNAs. Also deacylates mischarged glycyl-tRNA(Ala), protecting cells against glycine mischarging by AlaRS. Acts via tRNA-based rather than protein-based catalysis; rejects L-amino acids rather than detecting D-amino acids in the active site. By recycling D-aminoacyl-tRNA to D-amino acids and free tRNA molecules, this enzyme counteracts the toxicity associated with the formation of D-aminoacyl-tRNA entities in vivo and helps enforce protein L-homochirality. The chain is D-aminoacyl-tRNA deacylase from Alkalilimnicola ehrlichii (strain ATCC BAA-1101 / DSM 17681 / MLHE-1).